The sequence spans 367 residues: Glutamate 5-kinase (367 aa).

ATP is bound at residue lysine 9. Residues serine 49, aspartate 136, and asparagine 148 each coordinate substrate. Residues 168–169 (TD) and 210–216 (TGGMKSK) contribute to the ATP site. One can recognise a PUA domain in the interval 276–350 (SGQIEIDAGA…GMQSQQIQAR (75 aa)).

It belongs to the glutamate 5-kinase family.

The protein localises to the cytoplasm. The catalysed reaction is L-glutamate + ATP = L-glutamyl 5-phosphate + ADP. It functions in the pathway amino-acid biosynthesis; L-proline biosynthesis; L-glutamate 5-semialdehyde from L-glutamate: step 1/2. Functionally, catalyzes the transfer of a phosphate group to glutamate to form L-glutamate 5-phosphate. In Bacillus anthracis, this protein is Glutamate 5-kinase.